Reading from the N-terminus, the 179-residue chain is Large ribosomal subunit protein uL5 (179 aa).

It belongs to the universal ribosomal protein uL5 family. Part of the 50S ribosomal subunit; part of the 5S rRNA/L5/L18/L25 subcomplex. Contacts the 5S rRNA and the P site tRNA. Forms a bridge to the 30S subunit in the 70S ribosome.

Functionally, this is one of the proteins that bind and probably mediate the attachment of the 5S RNA into the large ribosomal subunit, where it forms part of the central protuberance. In the 70S ribosome it contacts protein S13 of the 30S subunit (bridge B1b), connecting the 2 subunits; this bridge is implicated in subunit movement. Contacts the P site tRNA; the 5S rRNA and some of its associated proteins might help stabilize positioning of ribosome-bound tRNAs. The sequence is that of Large ribosomal subunit protein uL5 from Nitratidesulfovibrio vulgaris (strain ATCC 29579 / DSM 644 / CCUG 34227 / NCIMB 8303 / VKM B-1760 / Hildenborough) (Desulfovibrio vulgaris).